A 283-amino-acid polypeptide reads, in one-letter code: Pantothenate synthetase (283 aa).

31-38 is a binding site for ATP; it reads MGALHDGH. His38 serves as the catalytic Proton donor. Gln62 lines the (R)-pantoate pocket. Gln62 is a beta-alanine binding site. Position 148–151 (148–151) interacts with ATP; it reads GKKD. Gln154 lines the (R)-pantoate pocket. ATP is bound by residues Val177 and 185-188; that span reads KSSR.

The protein belongs to the pantothenate synthetase family. In terms of assembly, homodimer.

The protein localises to the cytoplasm. The catalysed reaction is (R)-pantoate + beta-alanine + ATP = (R)-pantothenate + AMP + diphosphate + H(+). It participates in cofactor biosynthesis; (R)-pantothenate biosynthesis; (R)-pantothenate from (R)-pantoate and beta-alanine: step 1/1. Catalyzes the condensation of pantoate with beta-alanine in an ATP-dependent reaction via a pantoyl-adenylate intermediate. The chain is Pantothenate synthetase from Staphylococcus aureus (strain bovine RF122 / ET3-1).